A 771-amino-acid polypeptide reads, in one-letter code: DNA helicase/primase complex-associated protein (771 aa).

Belongs to the herpesviridae HEPA family. Associates with the primase and the helicase to form the helicase-primase complex. Interacts with the origin-binding protein. Interacts with the polymerase catalytic subunit.

The protein resides in the host nucleus. Component of the helicase/primase complex. Unwinds the DNA at the replication forks and generates single-stranded DNA for both leading and lagging strand synthesis. The primase synthesizes short RNA primers on the lagging strand that the polymerase presumably elongates using dNTPs. The primase-associated factor has no known catalytic activity in the complex and may serve to facilitate the formation of the replisome by directly interacting with the origin-binding protein and the polymerase. This Homo sapiens (Human) protein is DNA helicase/primase complex-associated protein.